We begin with the raw amino-acid sequence, 163 residues long: Nucleotide-binding protein HS_0688 (163 aa).

The protein belongs to the YajQ family.

Nucleotide-binding protein. This is Nucleotide-binding protein HS_0688 from Histophilus somni (strain 129Pt) (Haemophilus somnus).